Reading from the N-terminus, the 187-residue chain is MKQQANLIRAGQVIEHDGRRWTVLKQQIITPGKGGAFIQVEMRDLKTGNKTNERWRTADTVERLMTEEKDYTYSYTDGDNLVLMDPETFEQALIPAEILGDAVAFLQDNMQVTVDLVEGDPVAIHLPAQVTLEIVEADPVVKGQTASSSYKPAKLSNGVRVMVPPFIEAGERIVVRTEDSTYVERAK.

This sequence belongs to the elongation factor P family.

The protein localises to the cytoplasm. Its pathway is protein biosynthesis; polypeptide chain elongation. Involved in peptide bond synthesis. Stimulates efficient translation and peptide-bond synthesis on native or reconstituted 70S ribosomes in vitro. Probably functions indirectly by altering the affinity of the ribosome for aminoacyl-tRNA, thus increasing their reactivity as acceptors for peptidyl transferase. This Granulibacter bethesdensis (strain ATCC BAA-1260 / CGDNIH1) protein is Elongation factor P.